Here is a 143-residue protein sequence, read N- to C-terminus: Small ribosomal subunit protein uS11c (143 aa).

It belongs to the universal ribosomal protein uS11 family. As to quaternary structure, part of the 30S ribosomal subunit.

The protein resides in the plastid. Its subcellular location is the chloroplast. The sequence is that of Small ribosomal subunit protein uS11c from Zea mays (Maize).